Reading from the N-terminus, the 269-residue chain is Formamidopyrimidine-DNA glycosylase (269 aa).

The active-site Schiff-base intermediate with DNA is the P2. Residue E3 is the Proton donor of the active site. Catalysis depends on K57, which acts as the Proton donor; for beta-elimination activity. Residues H90, R109, and K150 each contribute to the DNA site. Residues 235-269 (QVYGRKGEPCRVCGTPIVATKHAQRATFYCRQCQK) form an FPG-type zinc finger. R259 (proton donor; for delta-elimination activity) is an active-site residue.

This sequence belongs to the FPG family. In terms of assembly, monomer. Zn(2+) serves as cofactor.

It carries out the reaction Hydrolysis of DNA containing ring-opened 7-methylguanine residues, releasing 2,6-diamino-4-hydroxy-5-(N-methyl)formamidopyrimidine.. It catalyses the reaction 2'-deoxyribonucleotide-(2'-deoxyribose 5'-phosphate)-2'-deoxyribonucleotide-DNA = a 3'-end 2'-deoxyribonucleotide-(2,3-dehydro-2,3-deoxyribose 5'-phosphate)-DNA + a 5'-end 5'-phospho-2'-deoxyribonucleoside-DNA + H(+). Its function is as follows. Involved in base excision repair of DNA damaged by oxidation or by mutagenic agents. Acts as a DNA glycosylase that recognizes and removes damaged bases. Has a preference for oxidized purines, such as 7,8-dihydro-8-oxoguanine (8-oxoG). Has AP (apurinic/apyrimidinic) lyase activity and introduces nicks in the DNA strand. Cleaves the DNA backbone by beta-delta elimination to generate a single-strand break at the site of the removed base with both 3'- and 5'-phosphates. The chain is Formamidopyrimidine-DNA glycosylase from Escherichia coli O7:K1 (strain IAI39 / ExPEC).